The following is a 271-amino-acid chain: uncharacterized protein (271 aa).

This is an uncharacterized protein from Human cytomegalovirus (strain Merlin) (HHV-5).